The sequence spans 535 residues: Peptide chain release factor 3 (535 aa).

The 269-residue stretch at 8 to 276 (ARRRTFAIIS…ALVEQAPPPG (269 aa)) folds into the tr-type G domain. GTP is bound by residues 17-24 (SHPDAGKT), 85-89 (DTPGH), and 139-142 (NKMD).

It belongs to the TRAFAC class translation factor GTPase superfamily. Classic translation factor GTPase family. PrfC subfamily.

The protein resides in the cytoplasm. Its function is as follows. Increases the formation of ribosomal termination complexes and stimulates activities of RF-1 and RF-2. It binds guanine nucleotides and has strong preference for UGA stop codons. It may interact directly with the ribosome. The stimulation of RF-1 and RF-2 is significantly reduced by GTP and GDP, but not by GMP. The sequence is that of Peptide chain release factor 3 from Bordetella petrii (strain ATCC BAA-461 / DSM 12804 / CCUG 43448).